The primary structure comprises 119 residues: MSTNNSTQQQDELDQIKSKIQDNLISSGNYDIINKQLKLQLYESGWYDKVSQIASRELMDHQQEVNSSNSNSSNSNKKNELTFDQLFAFVKPKAEELVPNEVKQDILNRITKYLDDIIQ.

Belongs to the ENY2 family. Component of the nuclear pore complex (NPC)-associated TREX-2 complex (transcription and export complex 2), composed of at least SUS1, SAC3, THP1, SEM1, and CDC31. TREX-2 contains 2 SUS1 chains. The TREX-2 complex interacts with the nucleoporin NUP1. Component of the 1.8 MDa SAGA transcription coactivator-HAT complex. SAGA is built of 5 distinct domains with specialized functions. Within the SAGA complex, SUS1, SGF11, SGF73 and UBP8 form an additional subcomplex of SAGA called the DUB module (deubiquitination module). Interacts directly with THP1, SAC3, SGF11, and with the RNA polymerase II.

The protein localises to the nucleus. The protein resides in the nucleoplasm. It is found in the cytoplasm. Its subcellular location is the P-body. In terms of biological role, involved in mRNA export coupled transcription activation by association with both the TREX-2 and the SAGA complexes. At the promoters, SAGA is required for recruitment of the basal transcription machinery. It influences RNA polymerase II transcriptional activity through different activities such as TBP interaction and promoter selectivity, interaction with transcription activators, and chromatin modification through histone acetylation and deubiquitination. Within the SAGA complex, participates in a subcomplex required for deubiquitination of H2B and for the maintenance of steady-state H3 methylation levels. The TREX-2 complex functions in docking export-competent ribonucleoprotein particles (mRNPs) to the nuclear entrance of the nuclear pore complex (nuclear basket). TREX-2 participates in mRNA export and accurate chromatin positioning in the nucleus by tethering genes to the nuclear periphery. May also be involved in cytoplasmic mRNA decay by interaction with components of P-bodies. This chain is Transcription and mRNA export factor SUS1, found in Candida albicans (strain SC5314 / ATCC MYA-2876) (Yeast).